Here is a 666-residue protein sequence, read N- to C-terminus: Tripartite terminase subunit 3 (666 aa).

The short motif at 208 to 215 is the Walker A motif element; it reads VPRRHGKT. Positions 300-305 match the Walker B motif motif; the sequence is LLIVDE. The active-site For ATPase activity is the Glu-305. Catalysis depends on for nuclease activity residues Asp-458, Glu-529, and Asp-643.

Belongs to the herpesviridae TRM3 protein family. As to quaternary structure, interacts with the terminase subunits TRM1 and TRM2. Interacts with portal protein.

It is found in the host nucleus. Functionally, component of the molecular motor that translocates viral genomic DNA in empty capsid during DNA packaging. Forms a tripartite terminase complex together with TRM1 and TRM2 in the host cytoplasm. Once the complex reaches the host nucleus, it interacts with the capsid portal vertex. This portal forms a ring in which genomic DNA is translocated into the capsid. TRM3 carries an RNase H-like nuclease activity that plays an important role for the cleavage of concatemeric viral DNA into unit length genomes. The sequence is that of Tripartite terminase subunit 3 from Homo sapiens (Human).